A 459-amino-acid polypeptide reads, in one-letter code: MLKIFNTLTREKEIFKPIHENKVGMYVCGVTVYDLCHIGHGRTFVCFDVIARYLRSLGYDLTYVRNITDVDDKIIKRALENKETCDQLVDRMVQEMYKDFDALNVLRPDFEPRATHHIPEIIEIVEKLIKRGHAYVADNGDVMFDVESFKEYGKLSRQDLEQLQAGARIEINEIKKNPMDFVLWKMSKENEPSWSSPWGAGRPGWHIECSAMNCKQLGEHFDIHGGGSDLMFPHHENEIAQSCCAHGGQYVNYWIHSGMIMVDKEKMSKSLGNFFTIRDVLNHYNAEAVRYFLLTAHYRSQLNYSEENLNLAQGALERLYTALRGADQSAVVFGGENFVETFREAMDDDFNTPNALSVLFEMAREINKLKTEDVEKANGLAARLRELGAILGLLQQDPEKFLQAGSDDDEVAKIEVLIKQRNEARAAKDWPVADAARNELTAMGIVLEDGPNGTTWRKQ.

Residue Cys-28 coordinates Zn(2+). The 'HIGH' region motif lies at 30–40 (VTVYDLCHIGH). Cys-209, His-234, and Glu-238 together coordinate Zn(2+). Positions 266 to 270 (KMSKS) match the 'KMSKS' region motif. Residue Lys-269 coordinates ATP.

This sequence belongs to the class-I aminoacyl-tRNA synthetase family. As to quaternary structure, monomer. Zn(2+) is required as a cofactor.

The protein resides in the cytoplasm. The enzyme catalyses tRNA(Cys) + L-cysteine + ATP = L-cysteinyl-tRNA(Cys) + AMP + diphosphate. The polypeptide is Cysteine--tRNA ligase (Haemophilus influenzae (strain PittGG)).